A 51-amino-acid polypeptide reads, in one-letter code: Insulin-1 (51 aa).

3 cysteine pairs are disulfide-bonded: cysteine 8/cysteine 37, cysteine 20/cysteine 50, and cysteine 36/cysteine 41.

It belongs to the insulin family. Heterodimer of a B chain and an A chain linked by two disulfide bonds.

It localises to the secreted. Insulin decreases blood glucose concentration. It increases cell permeability to monosaccharides, amino acids and fatty acids. It accelerates glycolysis, the pentose phosphate cycle, and glycogen synthesis in liver. In Batrachoididae sp. (Toadfish), this protein is Insulin-1 (ins1).